Reading from the N-terminus, the 161-residue chain is Cell division control protein 31 (161 aa).

EF-hand domains are found at residues 20–55 (EQKQEIYEAFSLFDMNNDGFLDYHELKVAMKALGFE), 56–91 (LPKREILDLIDEYDSEGRHLMKYDDFYIVMGEKILK), 93–128 (DPLDEIKRAFQLFDDDHTGKISIKNLRRVAKELGET), and 129–161 (LTDEELRAMIEEFDLDGDGEINENEFIAICTDS). Residues aspartate 33, asparagine 35, aspartate 37, and glutamate 44 each contribute to the Ca(2+) site. Threonine 130 bears the Phosphothreonine mark. Residues aspartate 142, aspartate 144, aspartate 146, glutamate 148, and glutamate 153 each contribute to the Ca(2+) site.

It belongs to the centrin family. As to quaternary structure, component of the spindle pole body (SPB), acting as the connector of microtubule arrays in the cytoplasm and the nucleoplasm, is involved in nuclear positioning before chromosome segregation, SPB separation, spindle formation, chromosome segregation, nuclear migration into the bud, nuclear reorientation after cytokinesis and nuclear fusion during conjugation. The SPB half-bridge, which is tightly associated with the cytoplasmic side of the nuclear envelope and the SPB, is playing a key role as the starting structure for and in the initiation of SPB duplication in G1. At the SPB half-bridge CDC31 interacts with KAR1, MPS3 and SFI1. Interacts with KIC1. Interacts with VPS13. Associates with nuclear pore complexes (NPCs).

It is found in the nucleus envelope. The protein localises to the cytoplasm. The protein resides in the cytoskeleton. It localises to the microtubule organizing center. Its subcellular location is the spindle pole body. In terms of biological role, functions as a component of the spindle pole body (SPB) half-bridge. At the SPB, it is recruited by KAR1 and MPS3 to the SPB half-bridge and involved in the initial steps of SPB duplication. Also involved in connection with the protein kinase KIC1 in the maintenance of cell morphology and integrity. May play a role in vesicle-mediated transport, in a VPS13-dependent manner. This is Cell division control protein 31 (CDC31) from Saccharomyces cerevisiae (strain ATCC 204508 / S288c) (Baker's yeast).